Here is a 103-residue protein sequence, read N- to C-terminus: Large ribosomal subunit protein bL21 (103 aa).

The protein belongs to the bacterial ribosomal protein bL21 family. As to quaternary structure, part of the 50S ribosomal subunit. Contacts protein L20.

Its function is as follows. This protein binds to 23S rRNA in the presence of protein L20. The protein is Large ribosomal subunit protein bL21 of Thermobifida fusca (strain YX).